Reading from the N-terminus, the 211-residue chain is MTKVLYITGHPNDETVSNSMAAGKSFIESYKQSNPDHEVVHIDLYDTFIPLIDKEVFDGWGKLQSGKGFEALSETEQQKVARLNELSDEFAAADKYIFVTPMWNLSFPAVVKAYIDAVAVAGKAFKYTAEGAVGLLTDKKALLIQSRGGIYSEGPAADFELGNRYLQTILGFFGVPSVEELVIEGHNQMPEKAEEIKADGVRRAEALGKTF.

Residues 17–19 (SNS), 102–105 (MWNL), and 146–149 (SRGG) contribute to the FMN site.

This sequence belongs to the azoreductase type 1 family. Homodimer. It depends on FMN as a cofactor.

It carries out the reaction 2 a quinone + NADH + H(+) = 2 a 1,4-benzosemiquinone + NAD(+). The enzyme catalyses N,N-dimethyl-1,4-phenylenediamine + anthranilate + 2 NAD(+) = 2-(4-dimethylaminophenyl)diazenylbenzoate + 2 NADH + 2 H(+). Its function is as follows. Quinone reductase that provides resistance to thiol-specific stress caused by electrophilic quinones. Functionally, also exhibits azoreductase activity. Catalyzes the reductive cleavage of the azo bond in aromatic azo compounds to the corresponding amines. This chain is FMN-dependent NADH:quinone oxidoreductase, found in Macrococcus caseolyticus (strain JCSC5402) (Macrococcoides caseolyticum).